The chain runs to 172 residues: Spermidine/spermine N(1)-acetyltransferase (172 aa).

The region spanning 3 to 172 (VKMKKCSRED…TDLIMAKTLI (170 aa)) is the N-acetyltransferase domain. Acetyl-CoA contacts are provided by residues 96-98 (IYI), 105-109 (HGLGK), and 135-137 (NEN). Tyr142 acts as the Proton donor in catalysis. Lys144 is an acetyl-CoA binding site.

The protein belongs to the acetyltransferase family. Monomer.

The enzyme catalyses an alkane-alpha,omega-diamine + acetyl-CoA = an N-acetylalkane-alpha,omega-diamine + CoA + H(+). Involved in the protection against polyamine toxicity by regulating their concentration. Could also be involved in the negative control of sporulation as well as production of degradative enzymes such as alpha-amylase, levansucrase and alkaline phosphatase. Catalyzes the transfer of an acetyl group from acetyl coenzyme A (AcCoA) to an acceptor substrate and releases both CoA and the acetylated product. It possesses N1-acetyltransferase activity toward polyamine substrates including spermidine, spermine, aminopropylcadaverine, norspermidine, homospermidine, N(8)-acetylspermidine, diaminopropane and agmatine. This is Spermidine/spermine N(1)-acetyltransferase from Bacillus subtilis (strain 168).